Reading from the N-terminus, the 382-residue chain is Dual-specificity RNA methyltransferase RlmN (382 aa).

Glu91 (proton acceptor) is an active-site residue. The region spanning 97–339 (EEDRGTLCIS…TTIRKTRGDD (243 aa)) is the Radical SAM core domain. Cys104 and Cys344 are joined by a disulfide. 3 residues coordinate [4Fe-4S] cluster: Cys111, Cys115, and Cys118. Residues 165–166 (GE), Ser197, 219–221 (SLH), and Asn301 each bind S-adenosyl-L-methionine. The active-site S-methylcysteine intermediate is Cys344.

The protein belongs to the radical SAM superfamily. RlmN family. It depends on [4Fe-4S] cluster as a cofactor.

Its subcellular location is the cytoplasm. The enzyme catalyses adenosine(2503) in 23S rRNA + 2 reduced [2Fe-2S]-[ferredoxin] + 2 S-adenosyl-L-methionine = 2-methyladenosine(2503) in 23S rRNA + 5'-deoxyadenosine + L-methionine + 2 oxidized [2Fe-2S]-[ferredoxin] + S-adenosyl-L-homocysteine. It catalyses the reaction adenosine(37) in tRNA + 2 reduced [2Fe-2S]-[ferredoxin] + 2 S-adenosyl-L-methionine = 2-methyladenosine(37) in tRNA + 5'-deoxyadenosine + L-methionine + 2 oxidized [2Fe-2S]-[ferredoxin] + S-adenosyl-L-homocysteine. Its function is as follows. Specifically methylates position 2 of adenine 2503 in 23S rRNA and position 2 of adenine 37 in tRNAs. m2A2503 modification seems to play a crucial role in the proofreading step occurring at the peptidyl transferase center and thus would serve to optimize ribosomal fidelity. This is Dual-specificity RNA methyltransferase RlmN from Albidiferax ferrireducens (strain ATCC BAA-621 / DSM 15236 / T118) (Rhodoferax ferrireducens).